A 441-amino-acid polypeptide reads, in one-letter code: Cobyrinate a,c-diamide synthase (441 aa).

The GATase cobBQ-type domain maps to 243-434; the sequence is TVAVADDAAF…AHVHPESTAF (192 aa). Cys323 (nucleophile) is an active-site residue.

It belongs to the CobB/CbiA family. Requires Mg(2+) as cofactor.

It catalyses the reaction cob(II)yrinate + 2 L-glutamine + 2 ATP + 2 H2O = cob(II)yrinate a,c diamide + 2 L-glutamate + 2 ADP + 2 phosphate + 2 H(+). Its pathway is cofactor biosynthesis; adenosylcobalamin biosynthesis; cob(II)yrinate a,c-diamide from sirohydrochlorin (anaerobic route): step 10/10. In terms of biological role, catalyzes the ATP-dependent amidation of the two carboxylate groups at positions a and c of cobyrinate, using either L-glutamine or ammonia as the nitrogen source. This Halobacterium salinarum (strain ATCC 700922 / JCM 11081 / NRC-1) (Halobacterium halobium) protein is Cobyrinate a,c-diamide synthase.